Here is an 88-residue protein sequence, read N- to C-terminus: Putative membrane protein insertion efficiency factor (88 aa).

A disordered region spans residues 68–88 (VPPPNSDTRARGEADARSHRL). Over residues 75 to 88 (TRARGEADARSHRL) the composition is skewed to basic and acidic residues.

Belongs to the UPF0161 family.

The protein resides in the cell inner membrane. Could be involved in insertion of integral membrane proteins into the membrane. This is Putative membrane protein insertion efficiency factor from Burkholderia cenocepacia (strain ATCC BAA-245 / DSM 16553 / LMG 16656 / NCTC 13227 / J2315 / CF5610) (Burkholderia cepacia (strain J2315)).